The primary structure comprises 158 residues: Non-secretory ribonuclease (158 aa).

Residues 1-27 (MVPKLFTSQICLLLLLGLLGVEGSLHA) form the signal peptide. Catalysis depends on His42, which acts as the Proton acceptor. 4 disulfide bridges follow: Cys50/Cys110, Cys64/Cys121, Cys82/Cys136, and Cys89/Cys98. 3'-nitrotyrosine is present on Tyr60. 65–69 (KNQNT) contacts substrate. Residues Asn86, Asn92, and Asn111 are each glycosylated (N-linked (GlcNAc...) asparagine). The Proton donor role is filled by His153.

Belongs to the pancreatic ribonuclease family. Interacts with and forms a tight 1:1 complex with RNH1. Dimerization of two such complexes may occur.

The protein resides in the lysosome. It is found in the cytoplasmic granule. The enzyme catalyses an [RNA] containing cytidine + H2O = an [RNA]-3'-cytidine-3'-phosphate + a 5'-hydroxy-ribonucleotide-3'-[RNA].. It catalyses the reaction an [RNA] containing uridine + H2O = an [RNA]-3'-uridine-3'-phosphate + a 5'-hydroxy-ribonucleotide-3'-[RNA].. In terms of biological role, this is a non-secretory ribonuclease. It is a pyrimidine specific nuclease with a slight preference for U. Cytotoxin and helminthotoxin. Possesses a wide variety of biological activities. The polypeptide is Non-secretory ribonuclease (RNASE2) (Aotus trivirgatus (Three-striped night monkey)).